The sequence spans 692 residues: Formate hydrogenlyase transcriptional activator FhlA (692 aa).

The GAF domain occupies 202-344 (DMDELVSEVA…QIAERVAIAV (143 aa)). In terms of domain architecture, Sigma-54 factor interaction spans 381–610 (IIGRSEAMYS…LENVIERAVL (230 aa)). ATP contacts are provided by residues 409–416 (GETGTGKE) and 472–481 (ADKSSLFLDE). Residues 663–682 (PKGAAQRLGLKRTTLLSRMK) constitute a DNA-binding region (H-T-H motif).

Required for induction of expression of the formate dehydrogenase H and hydrogenase-3 structural genes. Also activates expression of hyf operon (encodes the silent hydrogenase-4 gene cluster). This is Formate hydrogenlyase transcriptional activator FhlA (fhlA) from Escherichia coli (strain K12).